The following is a 462-amino-acid chain: Exodeoxyribonuclease 7 large subunit (462 aa).

It belongs to the XseA family. In terms of assembly, heterooligomer composed of large and small subunits.

Its subcellular location is the cytoplasm. It catalyses the reaction Exonucleolytic cleavage in either 5'- to 3'- or 3'- to 5'-direction to yield nucleoside 5'-phosphates.. Functionally, bidirectionally degrades single-stranded DNA into large acid-insoluble oligonucleotides, which are then degraded further into small acid-soluble oligonucleotides. The chain is Exodeoxyribonuclease 7 large subunit from Pectobacterium atrosepticum (strain SCRI 1043 / ATCC BAA-672) (Erwinia carotovora subsp. atroseptica).